The primary structure comprises 258 residues: DNA-directed RNA polymerase subunit Rpo3 (258 aa).

This sequence belongs to the archaeal Rpo3/eukaryotic RPB3 RNA polymerase subunit family. In terms of assembly, part of the RNA polymerase complex.

The protein localises to the cytoplasm. It catalyses the reaction RNA(n) + a ribonucleoside 5'-triphosphate = RNA(n+1) + diphosphate. DNA-dependent RNA polymerase (RNAP) catalyzes the transcription of DNA into RNA using the four ribonucleoside triphosphates as substrates. This is DNA-directed RNA polymerase subunit Rpo3 from Pyrobaculum calidifontis (strain DSM 21063 / JCM 11548 / VA1).